Reading from the N-terminus, the 94-residue chain is Defensin alpha 5 (94 aa).

The N-terminal stretch at 1-19 (MRTIAILAAILLVALQAQA) is a signal peptide. 3 cysteine pairs are disulfide-bonded: C65–C93, C67–C82, and C72–C92.

Belongs to the alpha-defensin family. Homodimer. Homotetramer. Interacts with B.antracis lef/lethal factor. In terms of processing, glycosylated. Post-translationally, proteolytically cleaved at Arg-62 by trypsin. Both the propeptide form proHD5/HD5(20-94) and HD5(56-94) are cleaved into the lumenal peptide form HD5(63-94) by trypsin. Unprocessed proHD5 exerts antimicrobial activities, but peptide potency is enhanced by peptide processing. Proteolytically cleaved in duodenal fluid; derived fragments are antimicrobially active against commensal bacteria (in vitro). (Microbial infection) The disulfide bridges and homodimerization are a prerequisite for the enhancement of S.flexneri adhesion and invasion. Expressed in the gastrointestinal, reproductive, and urinary tracts (at protein level). Expressed in Paneth cells of the small intestine (at protein level). Expressed throughout the urothelium of the lower urinary tract and in the collecting tubules of the kidney (at protein level). Expressed in stratified squamous epithelial cells of the female genital tract epithelia, such as in vagina, ectocervix, endocervix, endometrium, and fallopian tube (at protein level). Endometrial expression correlates with stages of the menstrual cycle: Expression is low during the early proliferative phase, increased during the mid- to late proliferative phase, peaks during the early secretory phase of the cycle, and decreases during the mid- to late secretory phase.

The protein resides in the secreted. It is found in the cytoplasmic vesicle. Its subcellular location is the secretory vesicle. Host-defense peptide that maintains sterility in the urogenital system. Has antimicrobial activity against a wide range of bacteria, including Gram-negative E.coli, P.aeruginosa and S.typhimurium, and Gram-positive E.aerogenes, S.aureus, B.cereus, E.faecium and L.monocytogenes. Confers resistance to intestinal infection by S.typhimurium. Exhibits antimicrobial activity against enteric commensal bacteria such as B.adolescentis, L.acidophilus, B.breve, L.fermentum, B.longum and S.thermophilus. Binds to bacterial membranes and causes membrane disintegration. Induces the secretion of the chemokine IL-8 by intestinal epithelial cells. Binds to B.antracis lef/lethal factor, a major virulence factor from B.anthracis, and neutralizes its enzymatic activity. Functionally, (Microbial infection) Acts as a target for S.flexneri infection by binding to the bacterium, possibly via bacterial surface proteins, and thereby augmenting infectivity via enhanced bacterial adhesion and invasion of epithelial cells and tissues. The polypeptide is Defensin alpha 5 (DEFA5) (Homo sapiens (Human)).